The chain runs to 784 residues: Protein-tyrosine-phosphatase MKP1 (784 aa).

Disordered stretches follow at residues 1 to 73 (MVGR…NSKA) and 94 to 118 (PKAG…TGER). The segment covering 22-34 (WRSASWSASRTAS) has biased composition (low complexity). Residues Thr-64 and Thr-109 each carry the phosphothreonine modification. In terms of domain architecture, Tyrosine-protein phosphatase spans 149–291 (ECSKVADHIY…LLQCQKRVHA (143 aa)). Catalysis depends on Cys-235, which acts as the Phosphocysteine intermediate. 235 to 241 (CCQGVSR) lines the substrate pocket. Residues 488–586 (HSSGSPSSTT…ASPSLAERRG (99 aa)) form a disordered region. 2 stretches are compositionally biased toward low complexity: residues 489–510 (SSGS…FLSP) and 521–553 (SLKS…LSLL). Residues 554–577 (PSQTSPKESRGVNTFLQPSPNRKA) show a composition bias toward polar residues. Phosphoserine occurs at positions 558 and 572.

Interacts with MPK6. May interact with MPK3 and MPK4. Phosphorylated on threonine and serine residues by MPK6.

Its subcellular location is the cytoplasm. The protein localises to the cytosol. The enzyme catalyses O-phospho-L-tyrosyl-[protein] + H2O = L-tyrosyl-[protein] + phosphate. Functionally, protein-tyrosine-phosphatase that acts as a negative regulator of MPK6 and MPK3 signaling by dephosphorylating and repressing MPK6 and MPK3. Modulates defense response by repressing salicylic acid (SA) production, camalexin biosynthesis and SNC1-mediated responses. Acts as a negative regulator of MPK6-mediated pathogen-associated molecular pattern (PAMP) responses, including MPK6 and MPK3 activation, accumulation of extracellular reactive oxygen species and inhibition of seedling growth. Involved in UV-B stress tolerance. May be involved in salt and genotoxic stress responses. The polypeptide is Protein-tyrosine-phosphatase MKP1 (MKP1) (Arabidopsis thaliana (Mouse-ear cress)).